Here is a 228-residue protein sequence, read N- to C-terminus: Probable endonuclease LCL3 (228 aa).

A helical membrane pass occupies residues 13-30 (LLVSAGFTTSLFVGFNLY). The 159-residue stretch at 52–210 (RQLYGKVTRV…KLLRRGVWSL (159 aa)) folds into the TNase-like domain. Arg-101 is a catalytic residue. Asp-106 contacts Ca(2+). Catalysis depends on residues Glu-109 and Arg-149.

It belongs to the LCL3 family.

Its subcellular location is the mitochondrion. It localises to the membrane. This Meyerozyma guilliermondii (strain ATCC 6260 / CBS 566 / DSM 6381 / JCM 1539 / NBRC 10279 / NRRL Y-324) (Yeast) protein is Probable endonuclease LCL3 (LCL3).